The sequence spans 173 residues: Small ribosomal subunit protein uS5 (173 aa).

An S5 DRBM domain is found at 17–80 (LREKMIAVNR…EESRRNMIKV (64 aa)).

The protein belongs to the universal ribosomal protein uS5 family. Part of the 30S ribosomal subunit. Contacts proteins S4 and S8.

With S4 and S12 plays an important role in translational accuracy. Functionally, located at the back of the 30S subunit body where it stabilizes the conformation of the head with respect to the body. The chain is Small ribosomal subunit protein uS5 from Delftia acidovorans (strain DSM 14801 / SPH-1).